The primary structure comprises 601 residues: Somatic embryogenesis receptor kinase 5 (601 aa).

An N-terminal signal peptide occupies residues 1–24; that stretch reads MEHGSSRGFIWLILFLDFVSRVTG. Residues 25–215 are Extracellular-facing; that stretch reads KTQVDALIAL…SPSPSPSGTS (191 aa). 6 N-linked (GlcNAc...) asparagine glycosylation sites follow: Asn52, Asn81, Asn105, Asn129, Asn151, and Asn184. LRR repeat units follow at residues 71–94, 95–118, 119–141, 143–165, and 166–188; these read SVTR…AQLP, NLQY…GDLM, ELVS…LGKL, KLRF…LTAL, and PLDV…GSFS. A helical transmembrane segment spans residues 216 to 236; that stretch reads AAIVVGVAAGAALLFALAWWL. At 237-601 the chain is on the cytoplasmic side; the sequence is RRKLQGHFLD…IENDYPSGPR (365 aa). Thr272 bears the Phosphothreonine mark. The Protein kinase domain occupies 275–572; the sequence is FSKRNVLGKG…KEEMPIHDFN (298 aa). An ATP-binding site is contributed by 281-289; it reads LGKGRFGIL. At Thr298 the chain carries Phosphothreonine. An ATP-binding site is contributed by Lys303. Ser356 and Ser359 each carry phosphoserine. Residue Asp402 is the Proton acceptor of the active site. A phosphothreonine mark is found at Thr435, Thr436, and Thr441. Tyr449 bears the Phosphotyrosine mark. The residue at position 451 (Ser451) is a Phosphoserine. Thr452 bears the Phosphothreonine mark. Phosphoserine occurs at positions 456 and 506. Position 532 is a phosphothreonine (Thr532).

Belongs to the protein kinase superfamily. Ser/Thr protein kinase family. In terms of assembly, interacts with TMK4/BARK1. Autophosphorylated.

It is found in the cell membrane. It carries out the reaction L-seryl-[protein] + ATP = O-phospho-L-seryl-[protein] + ADP + H(+). The catalysed reaction is L-threonyl-[protein] + ATP = O-phospho-L-threonyl-[protein] + ADP + H(+). In terms of biological role, serine/threonine-kinase of unknown function. The chain is Somatic embryogenesis receptor kinase 5 (SERK5) from Arabidopsis thaliana (Mouse-ear cress).